The following is a 429-amino-acid chain: FAD-dependent monooxygenase azaH (429 aa).

A helical transmembrane segment spans residues 5–25 (SIEVAIIGAGITGITLALGLL). FAD contacts are provided by glutamate 35 and glycine 48. 2 N-linked (GlcNAc...) asparagine glycosylation sites follow: asparagine 75 and asparagine 87. Arginine 116 contributes to the FAD binding site. Residue arginine 199 is part of the active site. The FAD site is built by aspartate 315 and alanine 328.

Belongs to the paxM FAD-dependent monooxygenase family. The cofactor is FAD.

Its subcellular location is the membrane. It participates in secondary metabolite biosynthesis. Functionally, FAD-dependent monooxygenase; part of the gene cluster that mediates the biosynthesis of azaphilones, a class of fungal metabolites characterized by a highly oxygenated pyrano-quinone bicyclic core and exhibiting a broad range of bioactivities. In the first step, the non-reducing polyketide synthase azaA forms the hexaketide precursor from successive condensations of five malonyl-CoA units, presumably with a simple acetyl-CoA starter unit. The reactive polyketide chain then undergoes a PT-mediated C2-C7 cyclization to afford the aromatic ring and is eventually released as an aldehyde through the R-domain. The putative ketoreductase azaE is proposed to catalyze the reduction of the terminal ketone resulting in the early culture product FK17-P2a. The monooxygenase azaH was demonstrated to be the only enzyme required to convert FK17-P2a to azanigerone E. AzaH first hydroxylates the benzaldehyde intermediate FK17-P2a at C4, which triggers the formation of the pyran-ring to afford azanigerone E. In parallel, the 2,4-dimethylhexanoyl chain is synthesized by the HR-PKS azaB and is proposed to be transferred to the C4-hydroxyl of azanigerone E by the acyltransferase azaD directly from the ACP domain of azaB. Alternatively, the 2,4-dimethyl-hexanoyl chain may be offloaded from the HR-PKS as a carboxylic acid and converted to an acyl-CoA by azaF. The resulting acyl-CoA molecule could then be taken up as a substrate by AzaD to form azanigerone B. To yield the carboxylic acid substituent in azanigerone A, the hydroxypropyl side chain of azanigerone B would need to undergo a C-C oxidative cleavage catalyzed by cytochrome P450 AzaI. AzaI is proposed to act on a vicinal diol that leads to a C-C bond scission either through an alkoxyradical intermediate or a peroxy complex. In the biosynthesis of azanigerone A, azanigerone B first undergoes hydroxylation at C10, possibly catalyzed by one of the two FAD-dependent monooxygenases encoded in the cluster, azaG or azaL, resulting in the vicinal diol azanigerone C. Oxidative cleavage of azanigerone C by azaI would yield the corresponding aldehyde derivative of azanigerone A. Finally, the dehydrogenase azaJ is proposed to convert the aldehyde functional group into the carboxylic acid, completing the conversion from azanigerone B to azanigerone A. Alternatively, the oxidation of aldehyde to carboxylic acid may be catalyzed by the same P450 enzyme azaI via consecutive oxidation or by endogenous alcohol dehydrogenase. In Aspergillus niger (strain ATCC 1015 / CBS 113.46 / FGSC A1144 / LSHB Ac4 / NCTC 3858a / NRRL 328 / USDA 3528.7), this protein is FAD-dependent monooxygenase azaH.